The chain runs to 296 residues: Inactive uridine phosphorylase B (296 aa).

The protein belongs to the PNP/UDP phosphorylase family. In terms of assembly, homodimer.

The protein is Inactive uridine phosphorylase B of Schistosoma mansoni (Blood fluke).